A 655-amino-acid chain; its full sequence is UvrABC system protein B (655 aa).

The region spanning 25–181 (DGINKGEKEQ…IRKLVFMQYE (157 aa)) is the Helicase ATP-binding domain. 38 to 45 (GVTGSGKT) is an ATP binding site. The Beta-hairpin motif lies at 91-114 (YYDYYQPEAYVPRTDTFIDKESSV). Residues 428–590 (QVEDLLGEVK…IVPKTTKRAL (163 aa)) enclose the Helicase C-terminal domain. Residues 615–650 (RLLISDLENDMKEAAAKLDFERAASLRDQIATLKGL) form the UVR domain.

This sequence belongs to the UvrB family. Forms a heterotetramer with UvrA during the search for lesions. Interacts with UvrC in an incision complex.

The protein localises to the cytoplasm. Its function is as follows. The UvrABC repair system catalyzes the recognition and processing of DNA lesions. A damage recognition complex composed of 2 UvrA and 2 UvrB subunits scans DNA for abnormalities. Upon binding of the UvrA(2)B(2) complex to a putative damaged site, the DNA wraps around one UvrB monomer. DNA wrap is dependent on ATP binding by UvrB and probably causes local melting of the DNA helix, facilitating insertion of UvrB beta-hairpin between the DNA strands. Then UvrB probes one DNA strand for the presence of a lesion. If a lesion is found the UvrA subunits dissociate and the UvrB-DNA preincision complex is formed. This complex is subsequently bound by UvrC and the second UvrB is released. If no lesion is found, the DNA wraps around the other UvrB subunit that will check the other stand for damage. The polypeptide is UvrABC system protein B (Methanobrevibacter smithii (strain ATCC 35061 / DSM 861 / OCM 144 / PS)).